The chain runs to 355 residues: Neurogenic differentiation factor 1 (355 aa).

The interval 1 to 93 (MTKSYSESGL…GPKKKKMTKA (93 aa)) is disordered. Residues 58–77 (DEEDEDEDLEEEDEEEEEDD) are compositionally biased toward acidic residues. Over residues 80-92 (PKRRGPKKKKMTK) the composition is skewed to basic residues. The Nuclear localization signal signature appears at 86–92 (KKKKMTK). Positions 100-152 (LRRMKANARERNRMHGLNAALDNLRKVVPCYSKTQKLSKIETLRLAKNYIWAL) constitute a bHLH domain. Ser161, Ser258, Ser265, and Ser273 each carry phosphoserine. Residue Ser334 is modified to Phosphoserine; by CaMK2.

Efficient DNA-binding requires dimerization with another bHLH protein. Heterodimer with TCF3/E47; the heterodimer is inhibited in presence of ID2, but not NR0B2, to E-box element. Interacts with EP300; the interaction is inhibited by NR0B2. Interacts with RREB1. Interacts with ATOH8. Phosphorylated. In islet cells, phosphorylated on Ser-273 upon glucose stimulation; which may be required for nuclear localization. In activated neurons, phosphorylated on Ser-334; which promotes dendritic growth. Phosphorylated by MAPK1; phosphorylation regulates heterodimerization and DNA-binding activities. Phosphorylation on Ser-265 and Ser-273 increases transactivation on the insulin promoter in glucose-stimulated insulinoma cells. Most abundant in pancreatic alpha- and beta-cells, less in brain and intestine.

Its subcellular location is the cytoplasm. The protein resides in the nucleus. In terms of biological role, acts as a transcriptional activator: mediates transcriptional activation by binding to E box-containing promoter consensus core sequences 5'-CANNTG-3'. Associates with the p300/CBP transcription coactivator complex to stimulate transcription of the secretin gene as well as the gene encoding the cyclin-dependent kinase inhibitor CDKN1A. Contributes to the regulation of several cell differentiation pathways, like those that promote the formation of early retinal ganglion cells, inner ear sensory neurons, granule cells forming either the cerebellum or the dentate gyrus cell layer of the hippocampus, endocrine islet cells of the pancreas and enteroendocrine cells of the small intestine. Together with PAX6 or SIX3, is required for the regulation of amacrine cell fate specification. Also required for dendrite morphogenesis and maintenance in the cerebellar cortex. Associates with chromatin to enhancer regulatory elements in genes encoding key transcriptional regulators of neurogenesis. This chain is Neurogenic differentiation factor 1 (NEUROD1), found in Mesocricetus auratus (Golden hamster).